We begin with the raw amino-acid sequence, 896 residues long: MAAPGSGAPCAELCRQLLLTLVVFSFACEACKKEIFNIPSKLEADKMIGRVNLKECLGSVDRIQSSDPDFRVLEDGSVYTAHAVVLSDEKRSFTIWLSDTEKRTQKEILVLLEYQKKVLKKRHTKETVLRRSKRRWAPIPCSMQENSLGPFPLFLQQVQSDAAQNYTIFYSISGRGVDKEPLNLFFIERDTGNLYCTQPVDREEYDVFDLIAYASTADGYSADFPLPLPIRVEDENDNHPIFTEAVYNFEVPESSRVGTTVGVVCATDRDEPDTMHTRLKYSILEQTPRSPGLFSVHPSTGVITTVSHYLDREVADKYSLIMKVQDMDGQFFGLMSTATCIITVKDSNDNLPTFRQNAYEASVEENTVNVEILRIPVEDKDLINTANWRANFTILKGNENGHFKITTDKATNEGVLSVVKPLDYEESHQVVLEIGVANEAPFTRDVALRMTTMNRAVVTVHVKDQDEGPECSPEVQYIRIKENSAVGSKISGYKAYDPETKSSSGLRYKILHDPKEWITVNEGSGSLETYKTLDREVITPKNDLYNITVLAIDQDGRSCTGTLAVSIEDVNDNPPEILQDYLVICKGNMDYVDISAIDHDSSINGAPFYFSLANTSPEINRLWTITRVNDTAARLAYQKNAQFQEYFIPVAVKDRAGLSATKTLRVNLCDCTNPVQCRAARRSADVILGKWAILAILLGIALLFSILLTLVCGIVSARNKKAFPDDLAQQNLIISNTEAPGDDKVCSANGFMTQTVNNANQGFCGTMGSGVKNGGQESIEMVKGGQQTLESCRGAGHHHTLDSCRGGTIEVENSRYTYSEWQNFTQPRLGEKLHLCNQDEEHMPSQDYVLTYNYEGRGSPAGSVGCCSEKQEEDGLDFLNNLEAKFAALAKTCTKR.

Residues 1–26 form the signal peptide; that stretch reads MAAPGSGAPCAELCRQLLLTLVVFSF. Positions 27 to 134 are excised as a propeptide; the sequence is ACEACKKEIF…KETVLRRSKR (108 aa). Cadherin domains lie at 135 to 242, 243 to 354, 355 to 471, 472 to 579, and 580 to 690; these read RWAP…HPIF, TEAV…LPTF, RQNA…GPEC, SPEV…EILQ, and DYLV…ILGK. Residues 135–690 are Extracellular-facing; that stretch reads RWAPIPCSMQ…RRSADVILGK (556 aa). Residue asparagine 165 is glycosylated (N-linked (GlcNAc...) asparagine). N-linked (GlcNAc...) asparagine glycans are attached at residues asparagine 391, asparagine 546, and asparagine 629. Residues 691 to 711 form a helical membrane-spanning segment; it reads WAILAILLGIALLFSILLTLV. The Cytoplasmic segment spans residues 712–896; sequence CGIVSARNKK…AALAKTCTKR (185 aa).

As to quaternary structure, may form homodimers. Interacts with DSG1; there is evidence to suggest that the interaction promotes cell-cell adhesion of keratinocytes. As to expression, expressed in stratified epithelia only, such as the epidermis, tongue, esophagus and rumen (at protein level).

It localises to the cell membrane. It is found in the cell junction. The protein localises to the desmosome. Its subcellular location is the cytoplasm. A component of desmosome cell-cell junctions which are required for positive regulation of cellular adhesion. Required for cell-cell adhesion in the epidermis, as a result required for the maintenance of the dermal cohesion and the dermal barrier function. Required for cell-cell adhesion of epithelial cell layers surrounding the telogen hair club, as a result plays an important role in telogen hair shaft anchorage. Essential for successful completion of embryo compaction and embryo development. This is Desmocollin-3 (DSC3) from Bos taurus (Bovine).